The primary structure comprises 314 residues: Signal peptidase I (314 aa).

Residues 5-25 (LTIFLLISTLVTGIFWSFYCI) form a helical membrane-spanning segment. At 26–63 (KSFKNYLINKKIINNNNFHQEKIEKSKNKTYFLKSLAS) the chain is on the cytoplasmic side. The chain crosses the membrane as a helical span at residues 64-84 (FFPIFLAIFIIRSFIYEPFQI). Residues 85–314 (PSGSMMPTLL…IRINRIGSIH (230 aa)) are Extracellular-facing. Catalysis depends on residues Ser-88 and Lys-143.

Belongs to the peptidase S26 family.

The protein resides in the cell membrane. The catalysed reaction is Cleavage of hydrophobic, N-terminal signal or leader sequences from secreted and periplasmic proteins.. The sequence is that of Signal peptidase I (lepB) from Buchnera aphidicola subsp. Acyrthosiphon pisum (strain APS) (Acyrthosiphon pisum symbiotic bacterium).